The chain runs to 371 residues: Probable G protein-coupled receptor 85 (371 aa).

The Extracellular segment spans residues 1–26 (MANYSHAGDHNILQNVSPLATFLKLT). The N-linked (GlcNAc...) asparagine glycan is linked to N3. Residues 27-47 (SLGFIIGVGVVGNLLISILLV) form a helical membrane-spanning segment. Residues 48 to 58 (KDKSLHRAPYY) are Cytoplasmic-facing. A helical membrane pass occupies residues 59–79 (FLLDLCASDILRSAICFPFVF). The Extracellular portion of the chain corresponds to 80–96 (TSVKNGSAWTYGTLTCK). N84 carries an N-linked (GlcNAc...) asparagine glycan. A disulfide bridge links C95 with C173. The helical transmembrane segment at 97-117 (VIAFLGVLSCFHTAFMLFCVS) threads the bilayer. The Cytoplasmic portion of the chain corresponds to 118–138 (VTRYLAIAHHRFYTKRLTFWT). Residues 139 to 159 (CLAVICMVWTLSVAMAFPPVL) traverse the membrane as a helical segment. At 160–189 (DVGTYSFIREEDQCTFQHRSFRANDSLGFM) the chain is on the extracellular side. N183 carries N-linked (GlcNAc...) asparagine glycosylation. Residues 190–210 (LLLALILLATQLVYLKLIFFV) traverse the membrane as a helical segment. The Cytoplasmic portion of the chain corresponds to 211–287 (HDRRKMKPVQ…FKTEKRISRM (77 aa)). A helical membrane pass occupies residues 288–308 (FYIITFFFLSLWGPYLVACYW). Residues 309-321 (RVFARGPVIPGGY) lie on the Extracellular side of the membrane. Residues 322 to 342 (LTAAVWMSFAQAGVNPFICIF) form a helical membrane-spanning segment. At 343-371 (SNRELRRCFSTTLLYCRKSRLPREPYCVI) the chain is on the cytoplasmic side.

Belongs to the G-protein coupled receptor 1 family.

Its subcellular location is the cell membrane. In terms of biological role, orphan receptor. The chain is Probable G protein-coupled receptor 85 (gpr85) from Danio rerio (Zebrafish).